A 214-amino-acid chain; its full sequence is Endothelin-3 (214 aa).

The N-terminal stretch at 1 to 16 (MEPGLWLLLGLTVTSA) is a signal peptide. The propeptide occupies 17 to 94 (AGLVPCPQSG…DKGLPAHHRP (78 aa)). A disordered region spans residues 24–91 (QSGDSGRASV…KQEDKGLPAH (68 aa)). The segment covering 25-35 (SGDSGRASVSQ) has biased composition (polar residues). Intrachain disulfides connect C97–C111 and C99–C107. Positions 118-214 (INTPEQTVPY…MSRTDKAHRP (97 aa)) are excised as a propeptide. Residues 159–173 (CTCMGADDKACAHFC) form an endothelin-like region. The disordered stretch occupies residues 183 to 214 (SGRAERPAAEEMRETGGPRQRLMSRTDKAHRP). Basic and acidic residues predominate over residues 185–198 (RAERPAAEEMRETG).

This sequence belongs to the endothelin/sarafotoxin family.

The protein resides in the secreted. Functionally, endothelins are endothelium-derived vasoconstrictor peptides. This is Endothelin-3 (Edn3) from Mus musculus (Mouse).